The following is a 331-amino-acid chain: Type II secretion system protein K (331 aa).

Residues 1–9 (MPSCRRQGG) constitute a propeptide, leader sequence. A helical transmembrane segment spans residues 8-27 (GGMALLVVLLILSVMVIIAS). The Periplasmic portion of the chain corresponds to 28–331 (NMSGRLQLEL…MLRRLNGGAE (304 aa)).

Belongs to the GSP K family. In terms of assembly, type II secretion is composed of four main components: the outer membrane complex, the inner membrane complex, the cytoplasmic secretion ATPase and the periplasm-spanning pseudopilus. Interacts with core component ExeG. Cleaved by prepilin peptidase.

The protein resides in the cell inner membrane. In terms of biological role, component of the type II secretion system required for the energy-dependent secretion of extracellular factors such as proteases and toxins from the periplasm. Plays a role in pseudopilus assembly and seems to control its length. Interacts with the pseudopilus tip complex that is critical for the recognition and binding of secretion substrates. The chain is Type II secretion system protein K (exeK) from Aeromonas hydrophila.